The sequence spans 121 residues: MAELNVEIVAVDRKIWSGEATFLFTRTTVGEIGILPRHIPLVAQLVDDAMVRVEREGEDDLRIAVDGGFLSVTEETVTILAESAEFSSEIDESAAREAAESDDPRVAARGRARLRAVGAID.

This sequence belongs to the ATPase epsilon chain family. In terms of assembly, F-type ATPases have 2 components, CF(1) - the catalytic core - and CF(0) - the membrane proton channel. CF(1) has five subunits: alpha(3), beta(3), gamma(1), delta(1), epsilon(1). CF(0) has three main subunits: a, b and c.

The protein localises to the cell membrane. In terms of biological role, produces ATP from ADP in the presence of a proton gradient across the membrane. In Mycobacterium avium (strain 104), this protein is ATP synthase epsilon chain.